A 397-amino-acid chain; its full sequence is F-box protein At3g28330 (397 aa).

Residues Lys6–Leu56 form the F-box domain.

This is F-box protein At3g28330 from Arabidopsis thaliana (Mouse-ear cress).